The following is a 279-amino-acid chain: Probable endonuclease 4 (279 aa).

His74, His112, Glu147, Asp180, His183, His214, Asp227, His229, and Glu259 together coordinate Zn(2+).

Belongs to the AP endonuclease 2 family. The cofactor is Zn(2+).

It carries out the reaction Endonucleolytic cleavage to 5'-phosphooligonucleotide end-products.. Functionally, endonuclease IV plays a role in DNA repair. It cleaves phosphodiester bonds at apurinic or apyrimidinic (AP) sites, generating a 3'-hydroxyl group and a 5'-terminal sugar phosphate. In Mycoplasma mobile (strain ATCC 43663 / 163K / NCTC 11711) (Mesomycoplasma mobile), this protein is Probable endonuclease 4.